The primary structure comprises 620 residues: Translocator protein BipB (620 aa).

The disordered stretch occupies residues 58–95 (QCDAQPAAHDARLDDKPALRAPQERDAPPLGASDTGSR). Over residues 66–84 (HDARLDDKPALRAPQERDA) the composition is skewed to basic and acidic residues. A coiled-coil region spans residues 309–339 (EMQAKREAELQKKSDEYQAQVKKAEEMQKTM). Helical transmembrane passes span 355–375 (FAAA…GLAL), 401–421 (AILK…LVAC), and 430–450 (LAGA…AAFV).

This sequence belongs to the SctE/SipB/YopB family.

The protein resides in the secreted. It is found in the host membrane. Its function is as follows. Plays a role in the bacterium-induced formation of multinucleated giant cell (MNGC), which is formed after host cell fusion, as well as in the intercellular spreading of bacteria and in the induction of apoptosis in macrophages. May act in concert with other effector proteins to induce fusion of host cell membranes. This Burkholderia pseudomallei (strain 1710b) protein is Translocator protein BipB (bipB).